The sequence spans 147 residues: Acidic phospholipase A2 beta-bungarotoxin A3 chain (147 aa).

Residues 1-19 (MYPAHLLVLSAVCVSLLGA) form the signal peptide. Positions 20–27 (ANIPPHPL) are excised as a propeptide. Cystine bridges form between C54–C146, C56–C72, C71–C127, C78–C120, C88–C113, and C106–C118. Ca(2+) is bound by residues Y55, G57, and G59. H75 is an active-site residue. Position 76 (D76) interacts with Ca(2+). D121 is a catalytic residue.

This sequence belongs to the phospholipase A2 family. Group I subfamily. D49 sub-subfamily. In terms of assembly, heterodimer; disulfide-linked. The A chains have phospholipase A2 activity and the B chains show homology with the basic protease inhibitors. The A3 chain is found in beta-5 bungarotoxins. Requires Ca(2+) as cofactor. In terms of tissue distribution, expressed by the venom gland.

The protein resides in the secreted. It catalyses the reaction a 1,2-diacyl-sn-glycero-3-phosphocholine + H2O = a 1-acyl-sn-glycero-3-phosphocholine + a fatty acid + H(+). Functionally, snake venom phospholipase A2 (PLA2) that inhibits neuromuscular transmission by blocking acetylcholine release from the nerve termini. PLA2 catalyzes the calcium-dependent hydrolysis of the 2-acyl groups in 3-sn-phosphoglycerides. This chain is Acidic phospholipase A2 beta-bungarotoxin A3 chain, found in Bungarus multicinctus (Many-banded krait).